The primary structure comprises 74 residues: Large ribosomal subunit protein uL29 (74 aa).

This sequence belongs to the universal ribosomal protein uL29 family.

In Streptomyces avermitilis (strain ATCC 31267 / DSM 46492 / JCM 5070 / NBRC 14893 / NCIMB 12804 / NRRL 8165 / MA-4680), this protein is Large ribosomal subunit protein uL29.